We begin with the raw amino-acid sequence, 451 residues long: Zinc finger MYND domain-containing protein 10 homolog (451 aa).

Zn(2+)-binding residues include Cys-412, Cys-415, Cys-423, Cys-426, Cys-432, Cys-436, His-444, and Cys-448. Residues 412-448 (CATCQAKAKKKCACCKKVHYCSRDCQLKDWPQHKLVC) form an MYND-type zinc finger.

The protein belongs to the ZMYND10 family. As to expression, specifically expressed in cells with flagella and motile cilia: chordotonal sensory neurons and sperm.

The protein localises to the cytoplasm. The protein resides in the cell projection. It is found in the cilium. It localises to the dynein axonemal particle. Functionally, plays a role in axonemal structure organization and motility. May be involved in axonemal pre-assembly of inner and outer dynein arms (IDA and ODA, respectively) for proper axoneme building for cilia motility. The polypeptide is Zinc finger MYND domain-containing protein 10 homolog (Drosophila melanogaster (Fruit fly)).